The primary structure comprises 68 residues: MNFYVNQSIIINSIKIDSITTSSVFQIGTAGSIKALSKFSNTGGFTEPLRPLQAKGQIISIKPSTSSS.

In terms of biological role, required for the formation of functionally normal spores. Could be involved in the establishment of normal spore coat structure and/or permeability, which allows the access of germinants to their receptor. This is Probable spore germination protein GerPB (gerPB) from Bacillus cereus.